We begin with the raw amino-acid sequence, 346 residues long: Holliday junction branch migration complex subunit RuvB (346 aa).

The tract at residues Ser-4–Tyr-185 is large ATPase domain (RuvB-L). ATP contacts are provided by residues Leu-24, Arg-25, Gly-66, Lys-69, Thr-70, Thr-71, Glu-132–Tyr-134, Arg-175, Tyr-185, and Arg-222. A Mg(2+)-binding site is contributed by Thr-70. The segment at Thr-186–Asp-256 is small ATPAse domain (RuvB-S). The interval Ala-259–Asp-346 is head domain (RuvB-H). Residues Arg-295, Arg-314, and Arg-319 each coordinate DNA.

It belongs to the RuvB family. Homohexamer. Forms an RuvA(8)-RuvB(12)-Holliday junction (HJ) complex. HJ DNA is sandwiched between 2 RuvA tetramers; dsDNA enters through RuvA and exits via RuvB. An RuvB hexamer assembles on each DNA strand where it exits the tetramer. Each RuvB hexamer is contacted by two RuvA subunits (via domain III) on 2 adjacent RuvB subunits; this complex drives branch migration. In the full resolvosome a probable DNA-RuvA(4)-RuvB(12)-RuvC(2) complex forms which resolves the HJ.

The protein resides in the cytoplasm. The catalysed reaction is ATP + H2O = ADP + phosphate + H(+). Functionally, the RuvA-RuvB-RuvC complex processes Holliday junction (HJ) DNA during genetic recombination and DNA repair, while the RuvA-RuvB complex plays an important role in the rescue of blocked DNA replication forks via replication fork reversal (RFR). RuvA specifically binds to HJ cruciform DNA, conferring on it an open structure. The RuvB hexamer acts as an ATP-dependent pump, pulling dsDNA into and through the RuvAB complex. RuvB forms 2 homohexamers on either side of HJ DNA bound by 1 or 2 RuvA tetramers; 4 subunits per hexamer contact DNA at a time. Coordinated motions by a converter formed by DNA-disengaged RuvB subunits stimulates ATP hydrolysis and nucleotide exchange. Immobilization of the converter enables RuvB to convert the ATP-contained energy into a lever motion, pulling 2 nucleotides of DNA out of the RuvA tetramer per ATP hydrolyzed, thus driving DNA branch migration. The RuvB motors rotate together with the DNA substrate, which together with the progressing nucleotide cycle form the mechanistic basis for DNA recombination by continuous HJ branch migration. Branch migration allows RuvC to scan DNA until it finds its consensus sequence, where it cleaves and resolves cruciform DNA. The chain is Holliday junction branch migration complex subunit RuvB from Nitrosomonas europaea (strain ATCC 19718 / CIP 103999 / KCTC 2705 / NBRC 14298).